The sequence spans 354 residues: G-protein coupled estrogen receptor 1 (354 aa).

The Extracellular segment spans residues 1-40 (MEEQTTSLVWIYVNSTEQLNTSYEYNTTYLIEDSDKYQSY). The helical transmembrane segment at 41–61 (VIGLFLSCLYTILLFPIGFIG) threads the bilayer. Topologically, residues 62-81 (NILILVVNLNHRGKMAIPDL) are cytoplasmic. Residues 82–102 (YFVNLAVADLILVADSLIEVF) traverse the membrane as a helical segment. The Extracellular segment spans residues 103–112 (NLNEKYYDYA). The helical transmembrane segment at 113–133 (VLCTFMSLFLQVNMYSSIFFL) threads the bilayer. Cysteine 115 and cysteine 192 are disulfide-bonded. Residues 134–160 (TWMSFDRYIALANSMSSSPLRTMQHAK) lie on the Cytoplasmic side of the membrane. Residues 161-181 (LSCGLIWMASILATLLPFTIV) form a helical membrane-spanning segment. Over 182-202 (QTQHRGEVHFCFANVFEIQWL) the chain is Extracellular. The helical transmembrane segment at 203–223 (EVTIGFLVPFSIIGLCYSLIG) threads the bilayer. The Cytoplasmic segment spans residues 224 to 245 (RILMRSQKHRGLWPRRQKALRM). Residues 246-266 (IVVVVLVFFICWLPENVFISI) form a helical membrane-spanning segment. Residues 267-292 (QLLQGTADPSQRTATTLRHDYPLTGH) lie on the Extracellular side of the membrane. A helical transmembrane segment spans residues 293–313 (IVNLAAFSNSCLNPIIYSFLG). Residues 314–353 (ETFRDKLRLFIKQKASWSVVNRFCHHGLDLHLPVRSEVSE) lie on the Cytoplasmic side of the membrane.

This sequence belongs to the G-protein coupled receptor 1 family. As to quaternary structure, homodimer. Heterodimer. In terms of tissue distribution, expressed in oocytes (at protein level). Highly expressed in brain, heart, testis and ovary. Weakly expressed in muscle and intestine.

It is found in the nucleus. Its subcellular location is the cytoplasm. The protein localises to the perinuclear region. It localises to the cytoskeleton. The protein resides in the cytoplasmic vesicle membrane. It is found in the cell membrane. Its subcellular location is the basolateral cell membrane. The protein localises to the endoplasmic reticulum membrane. It localises to the early endosome. The protein resides in the recycling endosome. It is found in the golgi apparatus. Its subcellular location is the trans-Golgi network. The protein localises to the golgi apparatus membrane. It localises to the cell projection. The protein resides in the dendrite. It is found in the dendritic spine membrane. Its subcellular location is the axon. The protein localises to the postsynaptic density. It localises to the mitochondrion membrane. Functionally, membrane G-protein coupled estrogen receptor that binds to 17-beta-estradiol (E2) with high affinity, leading to rapid and transient activation of numerous intracellular signaling pathways. Plays a role in the embryonic development of sensory and motor neurons. May induce apoptosis and reduce proliferation of brain cells. Involved in maintenance of meiotic arrest in oocytes. The polypeptide is G-protein coupled estrogen receptor 1 (gper1) (Micropogonias undulatus (Atlantic croaker)).